Here is a 245-residue protein sequence, read N- to C-terminus: Ribonuclease 3 (245 aa).

The region spanning 17–146 is the RNase III domain; it reads FAKKMNELGF…FVGALYLDQG (130 aa). Glu-59 lines the Mg(2+) pocket. The active site involves Asp-63. Residues Asp-132 and Glu-135 each contribute to the Mg(2+) site. The active site involves Glu-135. Residues 172 to 241 form the DRBM domain; the sequence is DFKTQFQEYV…AESAYSKLKS (70 aa). The tract at residues 217 to 245 is disordered; sequence ATGQGKTKKESEQKAAESAYSKLKSNNNL.

The protein belongs to the ribonuclease III family. In terms of assembly, homodimer. Requires Mg(2+) as cofactor.

Its subcellular location is the cytoplasm. It catalyses the reaction Endonucleolytic cleavage to 5'-phosphomonoester.. Digests double-stranded RNA. Involved in the processing of primary rRNA transcript to yield the immediate precursors to the large and small rRNAs (23S and 16S). Processes some mRNAs, and tRNAs when they are encoded in the rRNA operon. Processes pre-crRNA and tracrRNA of type II CRISPR loci if present in the organism. In Staphylococcus haemolyticus (strain JCSC1435), this protein is Ribonuclease 3.